The following is a 140-amino-acid chain: Putative nickel-responsive regulator 3 (140 aa).

Positions 81, 92, 94, and 100 each coordinate Ni(2+).

It belongs to the transcriptional regulatory CopG/NikR family. It depends on Ni(2+) as a cofactor.

Functionally, transcriptional regulator. The sequence is that of Putative nickel-responsive regulator 3 from Methanosarcina acetivorans (strain ATCC 35395 / DSM 2834 / JCM 12185 / C2A).